Consider the following 101-residue polypeptide: Small ribosomal subunit protein uS14 (101 aa).

It belongs to the universal ribosomal protein uS14 family. As to quaternary structure, part of the 30S ribosomal subunit. Contacts proteins S3 and S10.

Functionally, binds 16S rRNA, required for the assembly of 30S particles and may also be responsible for determining the conformation of the 16S rRNA at the A site. This Klebsiella pneumoniae (strain 342) protein is Small ribosomal subunit protein uS14.